A 96-amino-acid chain; its full sequence is Basic blue protein (96 aa).

The Phytocyanin domain maps to 1 to 96 (AVYVVGGSGG…SGMKIAVNAL (96 aa)). The Cu cation site is built by His39, Cys79, His84, and Met89. Cys52 and Cys85 form a disulfide bridge.

In Cucumis sativus (Cucumber), this protein is Basic blue protein.